Consider the following 189-residue polypeptide: UPF0301 protein Plut_0637 (189 aa).

This sequence belongs to the UPF0301 (AlgH) family.

This Chlorobium luteolum (strain DSM 273 / BCRC 81028 / 2530) (Pelodictyon luteolum) protein is UPF0301 protein Plut_0637.